Consider the following 471-residue polypeptide: Tetratricopeptide repeat protein 29 (471 aa).

7 TPR repeats span residues 92–131, 136–173, 182–215, 234–267, 274–307, 314–347, and 354–387; these read DKLP…EAAE, YEEV…AQLI, AEAE…THGR, VRTY…AREG, GEAS…STSL, GRAY…ARNN, and IRAC…AMEL. Positions 449-471 are disordered; it reads ATEDNIYQLPDAEEETRRSPENQ.

Expressed in spermatozoa (at protein level).

Its subcellular location is the cytoplasm. The protein localises to the cytoskeleton. It is found in the flagellum axoneme. Its function is as follows. Axonemal protein which is implicated in axonemal and/or peri-axonemal structure assembly and regulates flagellum assembly and beating and therefore sperm motility. The chain is Tetratricopeptide repeat protein 29 (Ttc29) from Mus musculus (Mouse).